The following is a 900-amino-acid chain: Alanine--tRNA ligase (900 aa).

4 residues coordinate Zn(2+): His587, His591, Cys691, and His695.

Belongs to the class-II aminoacyl-tRNA synthetase family. The cofactor is Zn(2+).

It localises to the cytoplasm. The catalysed reaction is tRNA(Ala) + L-alanine + ATP = L-alanyl-tRNA(Ala) + AMP + diphosphate. Functionally, catalyzes the attachment of alanine to tRNA(Ala) in a two-step reaction: alanine is first activated by ATP to form Ala-AMP and then transferred to the acceptor end of tRNA(Ala). Also edits incorrectly charged Ser-tRNA(Ala) and Gly-tRNA(Ala) via its editing domain. The polypeptide is Alanine--tRNA ligase (Aeropyrum pernix (strain ATCC 700893 / DSM 11879 / JCM 9820 / NBRC 100138 / K1)).